The following is a 137-amino-acid chain: Nucleoside diphosphate kinase (137 aa).

Residues lysine 9, phenylalanine 57, arginine 85, threonine 91, arginine 102, and asparagine 112 each coordinate ATP. Histidine 115 serves as the catalytic Pros-phosphohistidine intermediate.

This sequence belongs to the NDK family. As to quaternary structure, homotetramer. The cofactor is Mg(2+).

Its subcellular location is the cytoplasm. The catalysed reaction is a 2'-deoxyribonucleoside 5'-diphosphate + ATP = a 2'-deoxyribonucleoside 5'-triphosphate + ADP. It catalyses the reaction a ribonucleoside 5'-diphosphate + ATP = a ribonucleoside 5'-triphosphate + ADP. Its function is as follows. Major role in the synthesis of nucleoside triphosphates other than ATP. The ATP gamma phosphate is transferred to the NDP beta phosphate via a ping-pong mechanism, using a phosphorylated active-site intermediate. The chain is Nucleoside diphosphate kinase from Campylobacter lari (strain RM2100 / D67 / ATCC BAA-1060).